Reading from the N-terminus, the 176-residue chain is UPF0098 protein Rv2140c (176 aa).

T2 bears the N-acetylthreonine mark.

The protein belongs to the UPF0098 family.

The sequence is that of UPF0098 protein Rv2140c from Mycobacterium tuberculosis (strain ATCC 25618 / H37Rv).